We begin with the raw amino-acid sequence, 135 residues long: Small ribosomal subunit protein uS8 (135 aa).

The protein belongs to the universal ribosomal protein uS8 family. As to quaternary structure, part of the 30S ribosomal subunit. Contacts proteins S5 and S12.

In terms of biological role, one of the primary rRNA binding proteins, it binds directly to 16S rRNA central domain where it helps coordinate assembly of the platform of the 30S subunit. The chain is Small ribosomal subunit protein uS8 from Corynebacterium urealyticum (strain ATCC 43042 / DSM 7109).